The sequence spans 115 residues: Phosphoribosyl-AMP cyclohydrolase (115 aa).

D80 serves as a coordination point for Mg(2+). Zn(2+) is bound at residue C81. Residues D82 and D84 each coordinate Mg(2+). Residues C97 and C104 each contribute to the Zn(2+) site.

It belongs to the PRA-CH family. As to quaternary structure, homodimer. It depends on Mg(2+) as a cofactor. Zn(2+) serves as cofactor.

It localises to the cytoplasm. The catalysed reaction is 1-(5-phospho-beta-D-ribosyl)-5'-AMP + H2O = 1-(5-phospho-beta-D-ribosyl)-5-[(5-phospho-beta-D-ribosylamino)methylideneamino]imidazole-4-carboxamide. The protein operates within amino-acid biosynthesis; L-histidine biosynthesis; L-histidine from 5-phospho-alpha-D-ribose 1-diphosphate: step 3/9. Catalyzes the hydrolysis of the adenine ring of phosphoribosyl-AMP. The protein is Phosphoribosyl-AMP cyclohydrolase of Mycolicibacterium smegmatis (strain ATCC 700084 / mc(2)155) (Mycobacterium smegmatis).